Consider the following 269-residue polypeptide: Adenosylcobinamide-GDP ribazoletransferase (269 aa).

The next 5 helical transmembrane spans lie at 8–28, 41–61, 70–90, 114–136, and 196–216; these read QFNL…PTAI, YFPL…CFML, VCLL…DGLA, IGTY…LSSL, and VPAV…SACV.

Belongs to the CobS family. Requires Mg(2+) as cofactor.

It localises to the cell inner membrane. It catalyses the reaction alpha-ribazole + adenosylcob(III)inamide-GDP = adenosylcob(III)alamin + GMP + H(+). The enzyme catalyses alpha-ribazole 5'-phosphate + adenosylcob(III)inamide-GDP = adenosylcob(III)alamin 5'-phosphate + GMP + H(+). Its pathway is cofactor biosynthesis; adenosylcobalamin biosynthesis; adenosylcobalamin from cob(II)yrinate a,c-diamide: step 7/7. Joins adenosylcobinamide-GDP and alpha-ribazole to generate adenosylcobalamin (Ado-cobalamin). Also synthesizes adenosylcobalamin 5'-phosphate from adenosylcobinamide-GDP and alpha-ribazole 5'-phosphate. The polypeptide is Adenosylcobinamide-GDP ribazoletransferase (Pseudoalteromonas atlantica (strain T6c / ATCC BAA-1087)).